Consider the following 443-residue polypeptide: EGF-containing fibulin-like extracellular matrix protein 2 (443 aa).

The first 27 residues, 1 to 27 (MLPFASCLPGSLLLWAFLLLLLGAASP), serve as a signal peptide directing secretion. At Q28 the chain carries Pyrrolidone carboxylic acid. Positions 36–81 (YTECTDGYEWDADSQHCRDVNECLTIPEACKGEMKCINHYGGYLCL) constitute an EGF-like 1; atypical domain. 18 disulfide bridges follow: C58/C121, C65/C80, C71/C109, C127/C140, C134/C149, C151/C162, C168/C177, C173/C186, C188/C201, C207/C217, C213/C226, C228/C241, C247/C258, C254/C267, C269/C281, C287/C300, C294/C309, and C315/C327. Residues 91–117 (LHGEGPPPPAAHAQQPNPCPQGYEPDE) form a disordered region. Residues 123-163 (DVDECTQALHDCRPSQDCHNLPGSYQCTCPDGYRKIGPECV) form the EGF-like 2; calcium-binding domain. The EGF-like 3; calcium-binding domain maps to 164–202 (DIDECRYRYCQHRCVNLPGSFRCQCEPGFQLGPNNRSCV). N-linked (GlcNAc...) asparagine glycosylation is present at N198. Residues 203 to 242 (DVNECDMGAPCEQRCFNSYGTFLCRCNQGYELHRDGFSCS) form the EGF-like 4; calcium-binding domain. Residues 243–282 (DIDECGYSSYLCQYRCVNEPGRFSCHCPQGYQLLATRLCQ) form the EGF-like 5; calcium-binding domain. Residues 283-328 (DIDECETGAHQCSEAQTCVNFHGGYRCVDTNRCVEPYVQVSDNRCL) enclose the EGF-like 6; calcium-binding domain. N394 carries N-linked (GlcNAc...) asparagine glycosylation.

Belongs to the fibulin family. In terms of assembly, homodimer; disulfide-linked. Multimer; allows heparin binding. Monomer. Binds preferentially to p53 mutants. Interacts with FBN1 (via N-terminal domain); this interaction inhibits EFEMP2 binding to LOX and ELN. Interacts with ELN with moderate affinity; this interaction regulates ELN self-assembly maturation stage. Interacts with PCOLCE. Interacts with collagen type IV trimer (COL4A1-COL4A1-COL4A2), NID2 and moderately with COL15A1-derived endostatin. Interacts with EMILIN1; this interaction promotes the incorporation of EFEMP2 into the extracellular matrix. Interacts with LTBP4; the LTBP4 long form (LTBP4L) has a stronger binding affinity than the LTBP4 short form and the LTBP4 long form promotes fibrillar deposition of EFEMP2. Interacts with LOX (via propeptide); this interaction is strong and facilitates formation of ternary complexes with ELN during elastic fiber assembly; this interaction limits interaction of EFEMP2 with FBLN5. Interacts with PITX2. Interacts with FBLN5 with moderate affinity. Interacts with LOXL1 (via propeptide), LTBP1 and TGFB1 stronger than with LOXL2 and LTBP3. Post-translationally, N-glycosylated; contains mostly complex-type glycans. Not O-glycosylated. In terms of processing, cleaved by ELANE; produces a 50-55 kDa fragment. Cleaved by MMP2 and MMP9; produces several fragments. Expressed in elastic fibers of the skin, near the dermal-epidermal junction, surrounding the hair follicles and throughout the dermis. Expressed in tendon around tenocytes. Prominently expressed in cartilage, bone, perichondrium and ligaments. Also detected in bone marrow stroma. Expressed in aorta, lung, and esophagus.

It localises to the secreted. The protein localises to the extracellular space. The protein resides in the extracellular matrix. Its subcellular location is the basement membrane. Plays a crucial role in elastic fiber formation in tissue, and in the formation of ultrastructural connections between elastic laminae and smooth muscle cells in the aorta, therefore participates in terminal differentiation and maturation of smooth muscle cell (SMC) and in the mechanical properties and wall integrity maintenance of the aorta. In addition, is involved in the control of collagen fibril assembly in tissue throught proteolytic activation of LOX leading to cross- linking of collagen and elastin. Also promotes ELN coacervation and participates in the deposition of ELN coacervates on to microfibrils but also regulates ELN cross- linking through LOX interaction. Moreover adheres to the cells through heparin binding in a calcium-dependent manner and regulates vascularlar smooth muscle cells proliferation through angiotensin signaling. The chain is EGF-containing fibulin-like extracellular matrix protein 2 from Mus musculus (Mouse).